Consider the following 79-residue polypeptide: UPF0654 protein C11D3.01c (79 aa).

Residues 1–79 (MPNPGNVIGG…RAQEELENLE (79 aa)) are disordered. Residues 22–45 (EETKQREKEYLEEHEGEVGEEHQK) are compositionally biased toward basic and acidic residues.

This sequence belongs to the UPF0654 (con-6) family.

This chain is UPF0654 protein C11D3.01c, found in Schizosaccharomyces pombe (strain 972 / ATCC 24843) (Fission yeast).